The primary structure comprises 452 residues: MKKKILFLGVGGIGVSALAIAAKKLGADVAGYDSIPNKLTIKLESLGISIFSSPNNVDVSGYDMVVYSSAILDNHPLLSKARVLGVQCLKRAMFLALLMKDFRYSIAVTGTHGKTTTSSILATLLCKLDTTNSFVVGGVVKYADSNIQINGTDRLVIEADESDASFLYLNPNVAIVTNIDLDHMSTYKNSYDNLLENFANFLMKESIENIYLCVDDHGCNDLLDKYRSRVVGNIVSYGFAINSDARIYNYRVSDNLTTFTVEYKSGKYDFELQLPGKYNVQNATACVVACLDLGFSYKDIYNALATVKGVARRFDVYDKQISSHKIPVIDDYGHHPVEVTSSLGAVRDRYPNKKIIHVFQPHRYTRNRDLLIDWPKALSLADQLIILPTYSAGEQIIQGAESQDLIRNIPKVLLADSFDHVLYFLEKLVDDNTVVLIQGAGDITNLVGMIGE.

Residue 110–116 (GTHGKTT) participates in ATP binding.

The protein belongs to the MurCDEF family.

The protein resides in the cytoplasm. The catalysed reaction is UDP-N-acetyl-alpha-D-muramate + L-alanine + ATP = UDP-N-acetyl-alpha-D-muramoyl-L-alanine + ADP + phosphate + H(+). The protein operates within cell wall biogenesis; peptidoglycan biosynthesis. Cell wall formation. The sequence is that of UDP-N-acetylmuramate--L-alanine ligase from Francisella philomiragia subsp. philomiragia (strain ATCC 25017 / CCUG 19701 / FSC 153 / O#319-036).